The chain runs to 190 residues: ATP synthase subunit delta (190 aa).

The protein belongs to the ATPase delta chain family. F-type ATPases have 2 components, F(1) - the catalytic core - and F(0) - the membrane proton channel. F(1) has five subunits: alpha(3), beta(3), gamma(1), delta(1), epsilon(1). F(0) has three main subunits: a(1), b(2) and c(10-14). The alpha and beta chains form an alternating ring which encloses part of the gamma chain. F(1) is attached to F(0) by a central stalk formed by the gamma and epsilon chains, while a peripheral stalk is formed by the delta and b chains.

The protein resides in the cell inner membrane. In terms of biological role, f(1)F(0) ATP synthase produces ATP from ADP in the presence of a proton or sodium gradient. F-type ATPases consist of two structural domains, F(1) containing the extramembraneous catalytic core and F(0) containing the membrane proton channel, linked together by a central stalk and a peripheral stalk. During catalysis, ATP synthesis in the catalytic domain of F(1) is coupled via a rotary mechanism of the central stalk subunits to proton translocation. Its function is as follows. This protein is part of the stalk that links CF(0) to CF(1). It either transmits conformational changes from CF(0) to CF(1) or is implicated in proton conduction. This is ATP synthase subunit delta from Methylobacterium radiotolerans (strain ATCC 27329 / DSM 1819 / JCM 2831 / NBRC 15690 / NCIMB 10815 / 0-1).